The primary structure comprises 418 residues: Pigment epithelium-derived factor (418 aa).

The N-terminal stretch at 1-19 (MQALVLLLCIGALLGHSSC) is a signal peptide. Pyrrolidone carboxylic acid is present on Q20. Residues 20-39 (QNPASPPEEGSPDPDSTGAL) are disordered. Phosphoserine; by CK2 occurs at positions 24 and 114. A Phosphoserine; by PKA modification is found at S227. Residue N285 is glycosylated (N-linked (GlcNAc...) (complex) asparagine). The tract at residues 371–383 (TTPSPGLQPAHLT) is O-glycosylated at one site.

The protein belongs to the serpin family. Interacts with PNPLA2; this interaction stimulates the phospholipase A2 activity of PNPLA2. In terms of processing, the N-terminus is blocked. Extracellular phosphorylation enhances antiangiogenic activity. Post-translationally, N- and O-glycosylated. O-glycosylated with a core 1 or possibly core 8 glycan. In terms of tissue distribution, retinal pigment epithelial cells and blood plasma.

Its subcellular location is the secreted. The protein resides in the melanosome. In terms of biological role, neurotrophic protein; induces extensive neuronal differentiation in retinoblastoma cells. Potent inhibitor of angiogenesis. As it does not undergo the S (stressed) to R (relaxed) conformational transition characteristic of active serpins, it exhibits no serine protease inhibitory activity. The protein is Pigment epithelium-derived factor (SERPINF1) of Homo sapiens (Human).